The chain runs to 311 residues: Geranylgeranyl transferase type-2 subunit alpha (311 aa).

Positions 12–43 (EKAKAQRLKELEKIESYNKLVKSFEELREKQN) form a coiled coil. PFTA repeat units lie at residues 49 to 82 (ISLS…TETK), 93 to 126 (NEMK…DNCD), 129 to 162 (REMK…NIKL), 164 to 197 (DELK…YKEP), and 206 to 239 (EEFE…KSIP).

The protein belongs to the protein prenyltransferase subunit alpha family. Heterodimer of an alpha and a beta subunit.

The catalysed reaction is geranylgeranyl diphosphate + L-cysteinyl-[protein] = S-geranylgeranyl-L-cysteinyl-[protein] + diphosphate. In terms of biological role, catalyzes the transfer of a geranylgeranyl moiety from geranylgeranyl diphosphate to proteins with a C-terminal sequence motif -XCC or -XCXC, where both cysteines may become modified. The sequence is that of Geranylgeranyl transferase type-2 subunit alpha (rabggta) from Dictyostelium discoideum (Social amoeba).